Consider the following 865-residue polypeptide: General transcription factor 3C polypeptide 5 (865 aa).

Disordered regions lie at residues 1–21 (MNDE…NNNS), 111–163 (RPNK…NEKF), 191–215 (NNNT…TVPI), 391–522 (QDNH…NKEG), and 669–865 (DNKM…EESE). 5 stretches are compositionally biased toward low complexity: residues 7–21 (KNNS…NNNS), 115–126 (QQTQTQTQTQTQ), 140–158 (QSPK…QQPQ), 199–210 (DNVNDSSSSSSS), and 401–411 (SKNNNNNNNNK). 2 stretches are compositionally biased toward basic and acidic residues: residues 412-439 (DSIK…KQEE) and 448-489 (NNEK…KGDD). Composition is skewed to low complexity over residues 508-521 (EGNN…NNKE) and 677-696 (RSNT…PKST). Basic and acidic residues-rich tracts occupy residues 697-713 (QPKE…EPRP), 757-766 (QNKEIDESLK), and 773-786 (MEKD…KNEE). 2 stretches are compositionally biased toward acidic residues: residues 800–820 (DYDD…DFDG) and 839–865 (EDSE…EESE).

This sequence belongs to the TFIIIC subunit 5 family. In terms of assembly, part of the TFIIIC complex.

It is found in the nucleus. Involved in RNA polymerase III-mediated transcription. Integral, tightly associated component of the DNA-binding TFIIIC2 subcomplex that directly binds tRNA and virus-associated RNA promoters. The chain is General transcription factor 3C polypeptide 5 (gtf3c5) from Dictyostelium discoideum (Social amoeba).